The chain runs to 92 residues: Small ribosomal subunit protein uS19c (92 aa).

This sequence belongs to the universal ribosomal protein uS19 family.

The protein localises to the plastid. It localises to the chloroplast. Protein S19 forms a complex with S13 that binds strongly to the 16S ribosomal RNA. This Ostreococcus tauri protein is Small ribosomal subunit protein uS19c.